A 383-amino-acid polypeptide reads, in one-letter code: Queuine tRNA-ribosyltransferase (383 aa).

Asp90 (proton acceptor) is an active-site residue. Residues 90–94 (DSGGF), Asp144, Gln193, and Gly227 contribute to the substrate site. Residues 258 to 264 (GVGTPED) form an RNA binding region. Asp277 acts as the Nucleophile in catalysis. Residues 282–286 (TRNAR) are RNA binding; important for wobble base 34 recognition. 4 residues coordinate Zn(2+): Cys315, Cys317, Cys320, and His346.

The protein belongs to the queuine tRNA-ribosyltransferase family. As to quaternary structure, homodimer. Within each dimer, one monomer is responsible for RNA recognition and catalysis, while the other monomer binds to the replacement base PreQ1. Zn(2+) is required as a cofactor.

It catalyses the reaction 7-aminomethyl-7-carbaguanine + guanosine(34) in tRNA = 7-aminomethyl-7-carbaguanosine(34) in tRNA + guanine. It functions in the pathway tRNA modification; tRNA-queuosine biosynthesis. Catalyzes the base-exchange of a guanine (G) residue with the queuine precursor 7-aminomethyl-7-deazaguanine (PreQ1) at position 34 (anticodon wobble position) in tRNAs with GU(N) anticodons (tRNA-Asp, -Asn, -His and -Tyr). Catalysis occurs through a double-displacement mechanism. The nucleophile active site attacks the C1' of nucleotide 34 to detach the guanine base from the RNA, forming a covalent enzyme-RNA intermediate. The proton acceptor active site deprotonates the incoming PreQ1, allowing a nucleophilic attack on the C1' of the ribose to form the product. After dissociation, two additional enzymatic reactions on the tRNA convert PreQ1 to queuine (Q), resulting in the hypermodified nucleoside queuosine (7-(((4,5-cis-dihydroxy-2-cyclopenten-1-yl)amino)methyl)-7-deazaguanosine). The polypeptide is Queuine tRNA-ribosyltransferase (Ralstonia pickettii (strain 12J)).